A 231-amino-acid polypeptide reads, in one-letter code: Demethylmenaquinone methyltransferase (231 aa).

S-adenosyl-L-methionine is bound by residues threonine 62, aspartate 80, 102-103 (DA), and serine 119.

It belongs to the class I-like SAM-binding methyltransferase superfamily. MenG/UbiE family.

The catalysed reaction is a 2-demethylmenaquinol + S-adenosyl-L-methionine = a menaquinol + S-adenosyl-L-homocysteine + H(+). The protein operates within quinol/quinone metabolism; menaquinone biosynthesis; menaquinol from 1,4-dihydroxy-2-naphthoate: step 2/2. Functionally, methyltransferase required for the conversion of demethylmenaquinol (DMKH2) to menaquinol (MKH2). The polypeptide is Demethylmenaquinone methyltransferase (Streptomyces avermitilis (strain ATCC 31267 / DSM 46492 / JCM 5070 / NBRC 14893 / NCIMB 12804 / NRRL 8165 / MA-4680)).